Here is a 538-residue protein sequence, read N- to C-terminus: Syncytin-1 (538 aa).

Positions 1–20 (MALPYHILLFTVLLPSFTLT) are cleaved as a signal peptide. At 21–443 (APPPCRCMTS…NTGPWGLLSQ (423 aa)) the chain is on the extracellular side. N169 carries N-linked (GlcNAc...) asparagine glycosylation. The CXXC motif lies at 186–189 (CWIC). Disulfide bonds link C186/C189, C186/C405, and C397/C404. Residues N208, N214, N234, and N281 are each glycosylated (N-linked (GlcNAc...) asparagine). The fusion peptide stretch occupies residues 320–340 (ILPFVIGAGVLGALGTGIGGI). The immunosuppression stretch occupies residues 380 to 396 (LQNRRALDLLTAERGGT). Positions 397–405 (CLFLGEECC) match the CX6CC motif. N409 carries an N-linked (GlcNAc...) asparagine glycan. A helical membrane pass occupies residues 444–464 (WMPWILPFLGPLAAIILLLLF). The essential for the fusiogenic function stretch occupies residues 465 to 484 (GPCIFNLLVNFVSSRIEAVK). At 465–538 (GPCIFNLLVN…LLRPNSAGSS (74 aa)) the chain is on the cytoplasmic side. Residues 496 to 538 (KIYRRPLDRPASPRSDVNDIKCTPPEEISTAQPLLRPNSAGSS) form a disordered region.

The protein belongs to the gamma type-C retroviral envelope protein family. HERV class-I W env subfamily. As to quaternary structure, the mature envelope protein (Env) consists of a trimer of SU-TM heterodimers attached probably by a labile interchain disulfide bond. Interacts with the C-type lectin CD209/DC-SIGN. Post-translationally, specific enzymatic cleavages in vivo yield mature proteins. Envelope glycoproteins are synthesized as an inactive precursor that is heavily N-glycosylated and processed likely by furin in the Golgi to yield the mature SU and TM proteins. The cleavage site between SU and TM requires the minimal sequence [KR]-X-[KR]-R. In terms of processing, the CXXC motif is highly conserved across a broad range of retroviral envelope proteins. It is thought to participate in the formation of a labile disulfide bond possibly with the CX6CC motif present in the transmembrane protein.

The protein localises to the cell membrane. It is found in the virion. Its function is as follows. This endogenous retroviral envelope protein has retained its original fusogenic properties and participates in trophoblast fusion and the formation of a syncytium during placenta morphogenesis. May recognize and induce fusion through binding of SLC1A4 and SLC1A5. In terms of biological role, endogenous envelope proteins may have kept, lost or modified their original function during evolution. Retroviral envelope proteins mediate receptor recognition and membrane fusion during early infection. The surface protein (SU) mediates receptor recognition, while the transmembrane protein (TM) acts as a class I viral fusion protein. The protein may have at least 3 conformational states: pre-fusion native state, pre-hairpin intermediate state, and post-fusion hairpin state. During viral and target cell membrane fusion, the coiled coil regions (heptad repeats) assume a trimer-of-hairpins structure, positioning the fusion peptide in close proximity to the C-terminal region of the ectodomain. The formation of this structure appears to drive apposition and subsequent fusion of membranes. This chain is Syncytin-1 (ERVW-1), found in Gorilla gorilla gorilla (Western lowland gorilla).